A 989-amino-acid chain; its full sequence is Serine-repeat antigen protein 5 (989 aa).

The first 16 residues, 1-16, serve as a signal peptide directing secretion; that stretch reads MKSYISLFFILCVIFN. Disordered stretches follow at residues 26-91 and 165-245; these read SQTG…EKQD and LPSN…RNLQ. 3 stretches are compositionally biased toward low complexity: residues 52-87, 167-180, and 191-225; these read QGSTGASQPGSSEPSNPVSSGHSVSTVSVSQTSTSS, SNGTTGEQGSSTGT, and SSSSSSSSSSSSSSSSSSSSSSSSSSSSSSSSSSS. Position 167 is a phosphoserine (S167). Residue N168 is glycosylated (N-linked (GlcNAc...) asparagine). An interaction with PTKL region spans residues 208-245; it reads SSSSSSSSSSSSSSSSSSESLPANGPDSPTVKPPRNLQ. An N-linked (GlcNAc...) asparagine glycan is attached at N310. Residues 365–382 form an interaction with host VTN region; sequence YKYLSEDIVSNFKEIKAE. A disulfide bridge links C437 with C489. A Phosphothreonine modification is found at T541. 5 disulfide bridges follow: C559–C564, C573–C602, C585–C628, C619–C664, and C747–C801. The thiol-protease-like stretch occupies residues 571–989; sequence NNCISNLQVE…TNNECYFCYV (419 aa). Residues H754 and N779 contribute to the active site. N-linked (GlcNAc...) asparagine glycosylation occurs at N820. Positions 835-878 are cleaved as a propeptide — inhibition peptide; it reads KASPEFYHNLYFKNFNVGKKNLFSEKEDNENNKKLGNNYIIFGQ. S858 bears the Phosphoserine mark.

It belongs to the peptidase C1 family. May interact (via C-terminus) with PTKL (via SAM domain). As to quaternary structure, interacts (via C-terminus) with human VTN (via hemopexin repeat 2); may form heterotetramers of two VTN and SERA5 P47 heterodimers; the interaction may protect merozoites from phagocytosis by host monocytes; VTN glycosylation appears to be dispensable for the interaction. In terms of assembly, monomer. Interacts with kinase CPK1/CDPK1 at the schizont stage. Post-translationally, phosphorylation by CPK1/CDPK1 increases SERA5 protease activity towards a synthetic peptide in vitro. In terms of processing, just prior to merozoite egress from host erythrocytes, proteolytically cleaved into multiple fragments. Cleaved by SUB1 into p47 and p73, p73 is further cleaved by SUB1 into p56 and p18 and p56 is further processed into p50 by an unidentified protease. p47 remains covalently associated with p18 via disulfide bond. p47 can be processed into p25n and p25c by SUB1. p25c and p25n remain associated with p18. Proteolytic processing is essential for merozoite egress from host erythrocytes. The cleavage of the propeptide to produce p50 is necessary for protease activity and to promote merozoite egress.

Its subcellular location is the parasitophorous vacuole. The protein localises to the secreted. It localises to the cell membrane. Its function is as follows. Plays an essential role during the asexual blood stage development by controlling the kinetics of merozoite egress from host erythrocytes. Specifically, prevents premature rupture of the parasitophorous vacuole and host erythrocyte membranes. Functionally, may prevent merozoite phagocytosis by host monocytes via interaction with host VTN at the merozoite surface. Plays a role in parasite growth. Protease activity is controversial. The protein is Serine-repeat antigen protein 5 of Plasmodium falciparum (isolate CDC / Honduras).